Reading from the N-terminus, the 464-residue chain is Argininosuccinate lyase (464 aa).

This sequence belongs to the lyase 1 family. Argininosuccinate lyase subfamily.

Its subcellular location is the cytoplasm. It carries out the reaction 2-(N(omega)-L-arginino)succinate = fumarate + L-arginine. Its pathway is amino-acid biosynthesis; L-arginine biosynthesis; L-arginine from L-ornithine and carbamoyl phosphate: step 3/3. In Pseudomonas savastanoi pv. phaseolicola (strain 1448A / Race 6) (Pseudomonas syringae pv. phaseolicola (strain 1448A / Race 6)), this protein is Argininosuccinate lyase.